Here is an 82-residue protein sequence, read N- to C-terminus: MAKHYVYIVKCKDNSLYTGYTTNVEARIATHNAGKGAKYTKTRRPVVLVYQEMFSSKSEAMRREYEIKTFSRQQKLKMIEER.

In terms of domain architecture, GIY-YIG spans 2–77; it reads AKHYVYIVKC…KTFSRQQKLK (76 aa).

It belongs to the UPF0213 family.

The protein is UPF0213 protein SH2523 of Staphylococcus haemolyticus (strain JCSC1435).